A 400-amino-acid polypeptide reads, in one-letter code: Enoyl-[acyl-carrier-protein] reductase [NADH] (400 aa).

NAD(+) contacts are provided by residues Gly48 to Tyr53, Phe74 to Glu75, Asp111 to Ala112, and Leu139 to Ala140. Tyr225 contacts substrate. The active-site Proton donor is Tyr235. NAD(+)-binding positions include Lys244 and Val273–Thr275.

Belongs to the TER reductase family. In terms of assembly, monomer.

The enzyme catalyses a 2,3-saturated acyl-[ACP] + NAD(+) = a (2E)-enoyl-[ACP] + NADH + H(+). Its pathway is lipid metabolism; fatty acid biosynthesis. In terms of biological role, involved in the final reduction of the elongation cycle of fatty acid synthesis (FAS II). Catalyzes the reduction of a carbon-carbon double bond in an enoyl moiety that is covalently linked to an acyl carrier protein (ACP). This is Enoyl-[acyl-carrier-protein] reductase [NADH] from Shewanella loihica (strain ATCC BAA-1088 / PV-4).